A 754-amino-acid chain; its full sequence is Fibronectin type III domain-containing protein 1 (754 aa).

Positions Met-1–Gly-19 are cleaved as a signal peptide. Disordered regions lie at residues Ser-40 to Gly-61, Ala-85 to Ser-106, and Ala-130 to Gly-163. Over residues Ala-130 to Gln-161 the composition is skewed to low complexity. 5 consecutive Fibronectin type-III domains span residues Pro-250 to Leu-355, Ala-359 to Phe-449, Ala-453 to Asp-545, Glu-549 to Pro-642, and Leu-645 to Gly-742. Positions Ser-731 to Ile-754 are disordered.

As to expression, prismatic layer of shell (at protein level). Expressed primarily in the mantle with highest level in the outer epithelium of the mantle edge and lower level in the mantle pallium.

It localises to the secreted. The polypeptide is Fibronectin type III domain-containing protein 1 (Margaritifera margaritifera (Freshwater pearl mussel)).